A 1434-amino-acid chain; its full sequence is Nitric oxide synthase 1 (1434 aa).

Positions 1 to 205 are interaction with NOSIP; the sequence is MEDHMFGVQQ…LQGRGENNEL (205 aa). Positions 17 to 99 constitute a PDZ domain; sequence SVRLFKRKVG…ETHVVLILRG (83 aa). Disordered regions lie at residues 112-192 and 276-302; these read TGDG…KKAT and NNPY…PSKC. The interaction with DYNLL1/PIN stretch occupies residues 163 to 245; the sequence is YDDGQEAGSL…MGIQVDRDLD (83 aa). Polar residues predominate over residues 285-299; the sequence is PPTSGKQSPTKNGSP. S339 contributes to the (6R)-L-erythro-5,6,7,8-tetrahydrobiopterin binding site. Residue C420 participates in heme b binding. 4 residues coordinate L-arginine: Q483, W592, Y593, and E597. (6R)-L-erythro-5,6,7,8-tetrahydrobiopterin is bound by residues V682, W683, and F696. Y711 is a binding site for heme b. The interval 730–750 is calmodulin-binding; the sequence is KRRAIGFKKLAEAVKFSAKLM. Residues 760–940 form the Flavodoxin-like domain; the sequence is ATILYATETG…AFRTWAKKVF (181 aa). Positions 766, 767, 768, 770, 771, 812, 813, and 817 each coordinate FMN. Residues S852, S862, and S863 each carry the phosphoserine modification. The FMN site is built by S891, H896, C898, E924, and Q928. In terms of domain architecture, FAD-binding FR-type spans 995–1242; sequence KRVSAARLLS…VRGAPSFHLP (248 aa). R1015 lines the NADP(+) pocket. FAD is bound by residues H1037, R1178, Y1179, Y1180, S1181, T1196, and A1198. S1201 is an NADP(+) binding site. FAD is bound by residues Y1202, V1215, C1216, and S1217. Positions 1256, 1289, 1318, 1319, 1325, 1327, 1329, 1362, 1403, and 1405 each coordinate NADP(+).

Belongs to the NOS family. Homodimer. Interacts with DLG4; the interaction possibly being prevented by the association between NOS1 and CAPON. Forms a ternary complex with CAPON and RASD1. Forms a ternary complex with CAPON and SYN1. Interacts with ZDHHC23. Interacts with NOSIP; which may impair its synaptic location. Interacts with HTR4. Interacts with SLC6A4. Interacts with VAC14. Interacts (via N-terminal domain) with DLG4 (via N-terminal tandem pair of PDZ domains). Interacts with SLC6A4. Forms a complex with ASL, ASS1 and SLC7A1; the complex regulates cell-autonomous L-arginine synthesis and citrulline recycling while channeling extracellular L-arginine to nitric oxide synthesis pathway. Interacts with DMD; localizes NOS1 to sarcolemma in muscle cells. Interacts with DYNLL1; inhibits the nitric oxide synthase activity. It depends on heme b as a cofactor. The cofactor is FAD. FMN is required as a cofactor. Requires (6R)-L-erythro-5,6,7,8-tetrahydrobiopterin as cofactor. Post-translationally, ubiquitinated; mediated by STUB1/CHIP in the presence of Hsp70 and Hsp40 (in vitro). In terms of tissue distribution, isoform 1 is ubiquitously expressed: detected in skeletal muscle and brain, also in testis, lung and kidney, and at low levels in heart, adrenal gland and retina. Not detected in the platelets. Isoform 3 is expressed only in testis. Isoform 4 is detected in testis, skeletal muscle, lung, and kidney, at low levels in the brain, but not in the heart and adrenal gland.

It localises to the cell membrane. The protein resides in the sarcolemma. Its subcellular location is the cell projection. It is found in the dendritic spine. It catalyses the reaction 2 L-arginine + 3 NADPH + 4 O2 + H(+) = 2 L-citrulline + 2 nitric oxide + 3 NADP(+) + 4 H2O. Its activity is regulated as follows. Stimulated by calcium/calmodulin. Inhibited by DYNLL1 that prevents the dimerization of the protein. Inhibited by NOSIP. In terms of biological role, produces nitric oxide (NO) which is a messenger molecule with diverse functions throughout the body. In the brain and peripheral nervous system, NO displays many properties of a neurotransmitter. Probably has nitrosylase activity and mediates cysteine S-nitrosylation of cytoplasmic target proteins such SRR. This chain is Nitric oxide synthase 1, found in Homo sapiens (Human).